A 330-amino-acid chain; its full sequence is Ketol-acid reductoisomerase (NADP(+)) (330 aa).

The 181-residue stretch at 1-181 (MNVYYEQDAD…GGTKAGVIET (181 aa)) folds into the KARI N-terminal Rossmann domain. NADP(+) is bound by residues 24 to 27 (YGSQ), Arg-47, Ser-50, Ser-52, and 82 to 85 (DQTQ). His-107 is a catalytic residue. Gly-133 contacts NADP(+). The region spanning 182–327 (NFKDETETDL…AKLRNMMSWL (146 aa)) is the KARI C-terminal knotted domain. The Mg(2+) site is built by Asp-190, Glu-194, Glu-226, and Glu-230. Ser-251 lines the substrate pocket.

This sequence belongs to the ketol-acid reductoisomerase family. Mg(2+) serves as cofactor.

It catalyses the reaction (2R)-2,3-dihydroxy-3-methylbutanoate + NADP(+) = (2S)-2-acetolactate + NADPH + H(+). The enzyme catalyses (2R,3R)-2,3-dihydroxy-3-methylpentanoate + NADP(+) = (S)-2-ethyl-2-hydroxy-3-oxobutanoate + NADPH + H(+). The protein operates within amino-acid biosynthesis; L-isoleucine biosynthesis; L-isoleucine from 2-oxobutanoate: step 2/4. It participates in amino-acid biosynthesis; L-valine biosynthesis; L-valine from pyruvate: step 2/4. Its function is as follows. Involved in the biosynthesis of branched-chain amino acids (BCAA). Catalyzes an alkyl-migration followed by a ketol-acid reduction of (S)-2-acetolactate (S2AL) to yield (R)-2,3-dihydroxy-isovalerate. In the isomerase reaction, S2AL is rearranged via a Mg-dependent methyl migration to produce 3-hydroxy-3-methyl-2-ketobutyrate (HMKB). In the reductase reaction, this 2-ketoacid undergoes a metal-dependent reduction by NADPH to yield (R)-2,3-dihydroxy-isovalerate. The protein is Ketol-acid reductoisomerase (NADP(+)) of Chlorobium luteolum (strain DSM 273 / BCRC 81028 / 2530) (Pelodictyon luteolum).